A 267-amino-acid polypeptide reads, in one-letter code: Proenkephalin-A (267 aa).

Positions 1–24 are cleaved as a signal peptide; the sequence is MARFLTLCTWLLLLGPGLLATVRA. 3 disulfides stabilise this stretch: Cys-26–Cys-48, Cys-30–Cys-52, and Cys-33–Cys-65. The segment covering 163–175 has biased composition (basic and acidic residues); sequence TGDNRERSHHQDG. The disordered stretch occupies residues 163 to 182; that stretch reads TGDNRERSHHQDGSDNEEEV. 2 propeptides span residues 196 to 207 and 217 to 227; these read SPQLEDEAKELQ and VGRPEWWMDYQ. Ser-251 carries the post-translational modification Phosphoserine.

Belongs to the opioid neuropeptide precursor family. In terms of processing, proenkephalin-A is cleaved by CTSL to generate Met-enkephalin. Processed and degraded by ACE. Post-translationally, probably cleaved by ACE. In terms of processing, processed by ACE to generate Met-enkephalin in the nucleus accumbens of the brain. The N-terminal domain contains 6 conserved cysteines thought to be involved in disulfide bonding and/or processing.

It localises to the cytoplasmic vesicle. The protein resides in the secretory vesicle. Its subcellular location is the chromaffin granule lumen. The protein localises to the secreted. Functionally, neuropeptide that competes with and mimic the effects of opiate drugs. They play a role in a number of physiologic functions, including pain perception and responses to stress. Its function is as follows. Met-enkephalin-Arg-Phe neuropeptide acts as a strong ligand of Mu-type opioid receptor OPRM1. Met-enkephalin-Arg-Phe-binding to OPRM1 in the nucleus accumbens of the brain increases activation of OPRM1, leading to long-term synaptic depression of glutamate release. Increases glutamate release in the striatum and decreases GABA concentration in the striatum. In terms of biological role, increases glutamate release in the striatum. The chain is Proenkephalin-A from Homo sapiens (Human).